Reading from the N-terminus, the 127-residue chain is UPF0102 protein Glov_2230 (127 aa).

This sequence belongs to the UPF0102 family.

The polypeptide is UPF0102 protein Glov_2230 (Trichlorobacter lovleyi (strain ATCC BAA-1151 / DSM 17278 / SZ) (Geobacter lovleyi)).